Consider the following 155-residue polypeptide: Lipoprotein signal peptidase (155 aa).

Helical transmembrane passes span 52–72 (ILQGQMWFFYVITLVVIAGIV) and 85–105 (LGVALALMLGGAIGNFIDRVF). Active-site residues include D111 and D129. The helical transmembrane segment at 124-144 (IFNIADSSLCVGVILLFIQML) threads the bilayer.

Belongs to the peptidase A8 family.

It localises to the cell membrane. The catalysed reaction is Release of signal peptides from bacterial membrane prolipoproteins. Hydrolyzes -Xaa-Yaa-Zaa-|-(S,diacylglyceryl)Cys-, in which Xaa is hydrophobic (preferably Leu), and Yaa (Ala or Ser) and Zaa (Gly or Ala) have small, neutral side chains.. Its pathway is protein modification; lipoprotein biosynthesis (signal peptide cleavage). Its function is as follows. This protein specifically catalyzes the removal of signal peptides from prolipoproteins. In Bacillus pumilus (strain SAFR-032), this protein is Lipoprotein signal peptidase.